The primary structure comprises 282 residues: Aquaporin PIP-type (282 aa).

2 helical membrane passes run 39–61 (WRAA…ATVI) and 74–96 (GLLG…TAGI). The NPA 1 motif lies at 102 to 104 (NPA). A run of 4 helical transmembrane segments spans residues 116 to 138 (SLLR…VGLV), 159 to 181 (GYNK…YTVF), 201 to 223 (LPIG…TGIN), and 243 to 265 (HWIF…QYVL). The NPA 2 signature appears at 223-225 (NPA).

The protein belongs to the MIP/aquaporin (TC 1.A.8) family. PIP (TC 1.A.8.11) subfamily.

Its subcellular location is the membrane. In terms of biological role, water-specific channel. The chain is Aquaporin PIP-type from Atriplex canescens (Fourwing saltbush).